The primary structure comprises 540 residues: DEAD-box ATP-dependent RNA helicase 57 (540 aa).

The interval 24 to 73 (DFARFRQGPPAPDVASAAAPSPEKKRKRQSKAKAKKSKKRRAEGADSASD) is disordered. Over residues 47 to 64 (KKRKRQSKAKAKKSKKRR) the composition is skewed to basic residues. Residues 101-129 (KSEDSEVVRRRKEVEREIERAAILRKKFD) are a coiled coil. The Q motif signature appears at 146–174 (ELVSRYGCDSYLVGNLSKLGFQEPTPIQR). The 171-residue stretch at 177-347 (IPILLSGREC…RTIMHDAVRV (171 aa)) folds into the Helicase ATP-binding domain. 190-197 (APTGSGKT) provides a ligand contact to ATP. A DEAD box motif is present at residues 294–297 (DESD). Residues 375-519 (ALRQSFAESL…EVPSWIKALP (145 aa)) form the Helicase C-terminal domain.

It belongs to the DEAD box helicase family. DDX52/ROK1 subfamily.

It catalyses the reaction ATP + H2O = ADP + phosphate + H(+). The sequence is that of DEAD-box ATP-dependent RNA helicase 57 from Oryza sativa subsp. japonica (Rice).